The following is a 677-amino-acid chain: Pro-neuregulin-1, membrane-bound isoform (677 aa).

The segment covering 1–12 (MAEKKKVKEGKG) has biased composition (basic and acidic residues). Disordered stretches follow at residues 1 to 43 (MAEK…KEIK) and 78 to 106 (GAKNKPDSKPEHIKIRGKKKSSELQISKA). At 1–260 (MAEKKKVKEG…MEAEELYQKR (260 aa)) the chain is on the extracellular side. Over residues 13 to 24 (RKGKGKKDRKGK) the composition is skewed to basic residues. The region spanning 37–132 (PKLKEIKTQS…GNDTVTVNVT (96 aa)) is the Ig-like C2-type domain. Residues cysteine 57 and cysteine 116 are joined by a disulfide bond. Positions 78–91 (GAKNKPDSKPEHIK) are enriched in basic and acidic residues. 2 N-linked (GlcNAc...) asparagine glycosylation sites follow: asparagine 124 and asparagine 130. Residues 188-232 (HLIKCSDKEKTYCVNGGECYVLNGITSSNQFMCKCKPGFTGARCT) form the EGF-like domain. 3 disulfides stabilise this stretch: cysteine 192-cysteine 206, cysteine 200-cysteine 220, and cysteine 222-cysteine 231. A helical transmembrane segment spans residues 261–280 (VLTITGICIDLLVVGDMCVV). Residues 281–677 (DAYCKTKKQR…RKMTCKTLFI (397 aa)) are Cytoplasmic-facing. Residues 294-315 (NDRLRQSLRERNKNITNKDNRP) are compositionally biased toward basic and acidic residues. Disordered regions lie at residues 294-326 (NDRLRQSLRERNKNITNKDNRPHNPKNPPPRKN), 350-375 (ETSFSTSHYTSTTHHSTTVTQTPSHS), 397-418 (SVENSRHTSPTGPRGRLNGIGG), 457-479 (VEFKTPISPKSPCLETSPPESSL), and 503-617 (PPRL…FLSI). The span at 351 to 375 (TSFSTSHYTSTTHHSTTVTQTPSHS) shows a compositional bias: low complexity. Positions 397–407 (SVENSRHTSPT) are enriched in polar residues. A compositionally biased stretch (basic and acidic residues) spans 505-515 (RLREKRYDRKT). Residues 568–578 (VNSRRQKRTKP) show a composition bias toward basic residues. Over residues 591 to 600 (DSSSESSTSE) the composition is skewed to low complexity.

The protein belongs to the neuregulin family. Proteolytic cleavage close to the plasma membrane on the external face leads to the release of the soluble growth factor form. In terms of processing, extensive glycosylation precedes the proteolytic cleavage. Isoform alpha1 is expressed in brain and muscle. Isoform CRD is expressed in brain and spinal cord, but at very low level in muscle.

It localises to the cell membrane. The protein localises to the secreted. In terms of biological role, direct ligand for the ERBB tyrosine kinase receptors. Induces expression of acetylcholine receptor in synaptic nuclei. This is Pro-neuregulin-1, membrane-bound isoform (nrg1) from Xenopus laevis (African clawed frog).